Here is a 534-residue protein sequence, read N- to C-terminus: Origin of replication complex subunit 5 (534 aa).

Residues 1–36 form a disordered region; the sequence is MPPKEESSKVTRRSTRSSASVTVENSEPIESHTPTI. 83–90 contributes to the ATP binding site; that stretch reads GGASTGKT. The Nuclear localization signal motif lies at 129 to 136; the sequence is HRKCSLNG. The tract at residues 397 to 428 is disordered; that stretch reads MFDSTGGMDNRKRKRKASEKSMEKKEIAEQEA. Positions 414–424 are enriched in basic and acidic residues; sequence SEKSMEKKEIA.

It belongs to the ORC5 family. Component of the origin recognition complex (ORC) composed of at least ORC1 (ORC1A or ORC1B), ORC2, ORC3, ORC4, ORC5 and ORC6. ORC is regulated in a cell-cycle and development dependent manner. It is sequentially assembled at the exit from anaphase of mitosis and disassembled as cells enter S phase. Interacts directly with ORC1A, ORC1B, ORC2, ORC3, ORC4 and ORC6. In terms of tissue distribution, follow a cell-cycle regulation with a peak at the G1/S-phase. Mostly expressed in flower buds and cauline leaves, and, to a lower exent, in roots, leaves and stems. Expressed at low levels ubiquitously.

Its subcellular location is the nucleus. Its function is as follows. Component of the origin recognition complex (ORC) that binds origins of replication. DNA-binding is ATP-dependent. The specific DNA sequences that define origins of replication have not been identified yet. ORC is required to assemble the pre-replication complex necessary to initiate DNA replication. The protein is Origin of replication complex subunit 5 of Arabidopsis thaliana (Mouse-ear cress).